Consider the following 477-residue polypeptide: Protoporphyrinogen oxidase (477 aa).

Residues 9–14 (GGGISG), 34–35 (ES), W42, 57–60 (GPRG), V257, A449, and 454–456 (VAV) contribute to the FAD site.

Belongs to the protoporphyrinogen/coproporphyrinogen oxidase family. Protoporphyrinogen oxidase subfamily. In terms of assembly, monomer. Homodimer. Requires FAD as cofactor. In terms of tissue distribution, expressed in heart, brain, placenta, lung, liver, skeletal muscle, kidney and pancreas.

It localises to the mitochondrion inner membrane. The catalysed reaction is protoporphyrinogen IX + 3 O2 = protoporphyrin IX + 3 H2O2. It participates in porphyrin-containing compound metabolism; protoporphyrin-IX biosynthesis; protoporphyrin-IX from protoporphyrinogen-IX: step 1/1. Functionally, catalyzes the 6-electron oxidation of protoporphyrinogen-IX to form protoporphyrin-IX. The chain is Protoporphyrinogen oxidase (PPOX) from Homo sapiens (Human).